The primary structure comprises 405 residues: Arginine deiminase (405 aa).

Residue Cys395 is the Amidino-cysteine intermediate of the active site.

This sequence belongs to the arginine deiminase family.

Its subcellular location is the cytoplasm. The enzyme catalyses L-arginine + H2O = L-citrulline + NH4(+). Its pathway is amino-acid degradation; L-arginine degradation via ADI pathway; carbamoyl phosphate from L-arginine: step 1/2. The protein is Arginine deiminase of Rhodococcus erythropolis (strain PR4 / NBRC 100887).